A 331-amino-acid chain; its full sequence is Ketol-acid reductoisomerase (NADP(+)) (331 aa).

The region spanning Val2–Thr182 is the KARI N-terminal Rossmann domain. Residues Phe25–Gln28, Ser51, and Ser53 contribute to the NADP(+) site. His108 is an active-site residue. Position 134 (Gly134) interacts with NADP(+). Residues Thr183–Ile328 enclose the KARI C-terminal knotted domain. Residues Asp191, Glu195, Glu227, and Glu231 each coordinate Mg(2+). Ser252 is a binding site for substrate.

Belongs to the ketol-acid reductoisomerase family. Mg(2+) serves as cofactor.

The catalysed reaction is (2R)-2,3-dihydroxy-3-methylbutanoate + NADP(+) = (2S)-2-acetolactate + NADPH + H(+). It catalyses the reaction (2R,3R)-2,3-dihydroxy-3-methylpentanoate + NADP(+) = (S)-2-ethyl-2-hydroxy-3-oxobutanoate + NADPH + H(+). Its pathway is amino-acid biosynthesis; L-isoleucine biosynthesis; L-isoleucine from 2-oxobutanoate: step 2/4. It functions in the pathway amino-acid biosynthesis; L-valine biosynthesis; L-valine from pyruvate: step 2/4. Its function is as follows. Involved in the biosynthesis of branched-chain amino acids (BCAA). Catalyzes an alkyl-migration followed by a ketol-acid reduction of (S)-2-acetolactate (S2AL) to yield (R)-2,3-dihydroxy-isovalerate. In the isomerase reaction, S2AL is rearranged via a Mg-dependent methyl migration to produce 3-hydroxy-3-methyl-2-ketobutyrate (HMKB). In the reductase reaction, this 2-ketoacid undergoes a metal-dependent reduction by NADPH to yield (R)-2,3-dihydroxy-isovalerate. The polypeptide is Ketol-acid reductoisomerase (NADP(+)) (Parafrankia sp. (strain EAN1pec)).